Consider the following 775-residue polypeptide: DNA polymerase (775 aa).

The protein belongs to the DNA polymerase type-B family. In terms of assembly, monomer.

The enzyme catalyses DNA(n) + a 2'-deoxyribonucleoside 5'-triphosphate = DNA(n+1) + diphosphate. In terms of biological role, in addition to polymerase activity, this DNA polymerase exhibits 3' to 5' exonuclease activity. This Pyrococcus glycovorans protein is DNA polymerase (pol).